A 1148-amino-acid chain; its full sequence is Maintenance of telomere capping protein 5 (1148 aa).

WD repeat units follow at residues 63–106 (HHIT…SNAI), 112–152 (GHSR…RPFY), 156–195 (SWRS…TPLC), 199–239 (GHVS…TESK), and 299–348 (GHSD…YGKV). The region spanning 432-543 (EEVSAIGHKF…RFVLGEKVSL (112 aa)) is the RWD domain. Phosphoserine is present on Ser759. The tract at residues 963 to 990 (THNTLNGSSKFTEPAQKQGSRAISSSPF) is disordered. Over residues 964–990 (HNTLNGSSKFTEPAQKQGSRAISSSPF) the composition is skewed to polar residues.

The protein belongs to the WD repeat WDR59 family. Component of the SEA complex composed of at least IML1/SEA1, RTC1/SEA2, MTC5/SEA3, NPR2, NPR3, SEA4, SEC13 and SEH1.

Its subcellular location is the vacuole membrane. Its function is as follows. Component of the SEA complex which coats the vacuolar membrane and is involved in intracellular trafficking, autophagy, response to nitrogen starvation, and amino acid biogenesis. May be involved in telomere capping. The chain is Maintenance of telomere capping protein 5 (MTC5) from Saccharomyces cerevisiae (strain ATCC 204508 / S288c) (Baker's yeast).